Here is a 356-residue protein sequence, read N- to C-terminus: Fructose-1,6-bisphosphatase class 1 (356 aa).

The tract at residues 1 to 26 is disordered; that stretch reads MAREWPMTHPSNHPMDHHHQTLQAHL. Glutamate 101, aspartate 120, leucine 122, and aspartate 123 together coordinate Mg(2+). Residues 123–126 and asparagine 211 each bind substrate; that span reads DGSS. Residue glutamate 283 participates in Mg(2+) binding.

The protein belongs to the FBPase class 1 family. Homotetramer. The cofactor is Mg(2+).

Its subcellular location is the cytoplasm. The enzyme catalyses beta-D-fructose 1,6-bisphosphate + H2O = beta-D-fructose 6-phosphate + phosphate. It functions in the pathway carbohydrate biosynthesis; Calvin cycle. This Bradyrhizobium sp. (strain ORS 278) protein is Fructose-1,6-bisphosphatase class 1.